Consider the following 141-residue polypeptide: Large-conductance mechanosensitive channel (141 aa).

The next 2 helical transmembrane spans lie at 16–36 (VIDLAVGVIIGAAFGKIVDSL) and 86–106 (GNFITVAVNFLILAFIVFLMV).

This sequence belongs to the MscL family. In terms of assembly, homopentamer.

The protein localises to the cell inner membrane. In terms of biological role, channel that opens in response to stretch forces in the membrane lipid bilayer. May participate in the regulation of osmotic pressure changes within the cell. The protein is Large-conductance mechanosensitive channel of Ralstonia nicotianae (strain ATCC BAA-1114 / GMI1000) (Ralstonia solanacearum).